The chain runs to 134 residues: Small ribosomal subunit protein uS11 (134 aa).

This sequence belongs to the universal ribosomal protein uS11 family. Part of the 30S ribosomal subunit. Interacts with proteins S7 and S18. Binds to IF-3.

Located on the platform of the 30S subunit, it bridges several disparate RNA helices of the 16S rRNA. Forms part of the Shine-Dalgarno cleft in the 70S ribosome. In Parafrankia sp. (strain EAN1pec), this protein is Small ribosomal subunit protein uS11.